A 325-amino-acid polypeptide reads, in one-letter code: Germination protease (325 aa).

Residues 1–7 constitute a propeptide that is removed on maturation; that stretch reads MYNVRTD.

This sequence belongs to the peptidase A25 family. In terms of assembly, homotetramer. Post-translationally, autoproteolytically processed. The inactive tetrameric zymogen termed p46 autoprocesses to a smaller form termed p41, which is active only during spore germination.

It carries out the reaction Endopeptidase action with P4 Glu or Asp, P1 preferably Glu &gt; Asp, P1' hydrophobic and P2' Ala.. In terms of biological role, initiates the rapid degradation of small, acid-soluble proteins during spore germination. This chain is Germination protease, found in Clostridium perfringens (strain 13 / Type A).